A 184-amino-acid polypeptide reads, in one-letter code: Peptidyl-tRNA hydrolase (184 aa).

Residue Tyr-14 coordinates tRNA. His-19 serves as the catalytic Proton acceptor. The tRNA site is built by Phe-64, Asn-66, and Asn-112.

This sequence belongs to the PTH family. In terms of assembly, monomer.

It localises to the cytoplasm. The catalysed reaction is an N-acyl-L-alpha-aminoacyl-tRNA + H2O = an N-acyl-L-amino acid + a tRNA + H(+). Hydrolyzes ribosome-free peptidyl-tRNAs (with 1 or more amino acids incorporated), which drop off the ribosome during protein synthesis, or as a result of ribosome stalling. In terms of biological role, catalyzes the release of premature peptidyl moieties from peptidyl-tRNA molecules trapped in stalled 50S ribosomal subunits, and thus maintains levels of free tRNAs and 50S ribosomes. The chain is Peptidyl-tRNA hydrolase from Thermoanaerobacter pseudethanolicus (strain ATCC 33223 / 39E) (Clostridium thermohydrosulfuricum).